The chain runs to 688 residues: Lectin-domain containing receptor kinase VI.3 (688 aa).

Positions 1-14 are cleaved as a signal peptide; it reads MLVLFLLLTIPTRA. Residues 15–306 lie on the Extracellular side of the membrane; that stretch reads QRTTTETPKT…KRGYNSQVLA (292 aa). A legume-lectin like region spans residues 22-271; the sequence is PKTEFIFRGF…AHYVMGWSFS (250 aa). A helical membrane pass occupies residues 307-327; it reads LIVALSGVTVILLALLFFFVM. Residues 328–688 lie on the Cytoplasmic side of the membrane; it reads YKKRLQQGEV…VSSSSVISGR (361 aa). The Protein kinase domain maps to 361–640; sequence FKENRIVGTG…LNGDDDVPEI (280 aa). Residues 367–375 and lysine 391 contribute to the ATP site; that span reads VGTGGFGTV. Aspartate 490 serves as the catalytic Proton acceptor. The interval 662-688 is disordered; the sequence is VSSDRASSSVPSFSVTRVSSSSVISGR.

In the C-terminal section; belongs to the protein kinase superfamily. Ser/Thr protein kinase family. This sequence in the N-terminal section; belongs to the leguminous lectin family.

The protein localises to the cell membrane. It carries out the reaction L-seryl-[protein] + ATP = O-phospho-L-seryl-[protein] + ADP + H(+). The enzyme catalyses L-threonyl-[protein] + ATP = O-phospho-L-threonyl-[protein] + ADP + H(+). In terms of biological role, involved in negative regulation of abscisic acid response in seed germination. This Arabidopsis thaliana (Mouse-ear cress) protein is Lectin-domain containing receptor kinase VI.3 (LECRK63).